A 217-amino-acid chain; its full sequence is tRNA (guanine-N(7)-)-methyltransferase (217 aa).

The S-adenosyl-L-methionine site is built by Glu-56, Glu-81, Asp-108, and Asp-130. The active site involves Asp-130. Residues Lys-134 and Asp-166 each contribute to the substrate site.

This sequence belongs to the class I-like SAM-binding methyltransferase superfamily. TrmB family.

The catalysed reaction is guanosine(46) in tRNA + S-adenosyl-L-methionine = N(7)-methylguanosine(46) in tRNA + S-adenosyl-L-homocysteine. Its pathway is tRNA modification; N(7)-methylguanine-tRNA biosynthesis. Catalyzes the formation of N(7)-methylguanine at position 46 (m7G46) in tRNA. The polypeptide is tRNA (guanine-N(7)-)-methyltransferase (Neorickettsia sennetsu (strain ATCC VR-367 / Miyayama) (Ehrlichia sennetsu)).